The primary structure comprises 196 residues: Thymidine kinase (196 aa).

17–24 (GPMFAGKT) serves as a coordination point for ATP. The active-site Proton acceptor is E92. Residue F121 coordinates substrate. Zn(2+) contacts are provided by C146 and C149. 166-170 (LILAG) contacts substrate. Zn(2+)-binding residues include C179 and C182.

The protein belongs to the thymidine kinase family.

The catalysed reaction is thymidine + ATP = dTMP + ADP + H(+). Its function is as follows. Phosphorylates thymidine. ASFV replicates in the cytoplasm of infected cells and contains genes encoding a number of enzymes needed for DNA synthesis, including thymidine kinase. Important for growth in swine macrophages in vitro and is a virus virulence factor in swine. This Ornithodoros (relapsing fever ticks) protein is Thymidine kinase.